Here is a 991-residue protein sequence, read N- to C-terminus: Antigenic heat-stable 120 kDa protein (991 aa).

The span at Tyr-1–Gly-10 shows a compositional bias: acidic residues. Disordered stretches follow at residues Tyr-1 to Pro-63 and Lys-738 to Asp-789. A compositionally biased stretch (polar residues) spans Thr-36 to Pro-63. A compositionally biased stretch (basic and acidic residues) spans Gly-743–Asp-789.

The protein localises to the cytoplasm. This Rickettsia australis protein is Antigenic heat-stable 120 kDa protein (sca4).